The primary structure comprises 265 residues: Undecaprenyl-diphosphatase (265 aa).

Transmembrane regions (helical) follow at residues 7-27, 45-65, 86-106, 108-128, 145-165, 186-206, 214-234, and 245-265; these read IIVS…PISS, TKIL…YFFH, LHII…YKKI, LLFN…FLLI, ISLL…YPGF, IEFS…YDFI, ILDL…SILC, and TSLI…YFIN.

This sequence belongs to the UppP family.

It localises to the cell membrane. The catalysed reaction is di-trans,octa-cis-undecaprenyl diphosphate + H2O = di-trans,octa-cis-undecaprenyl phosphate + phosphate + H(+). Its function is as follows. Catalyzes the dephosphorylation of undecaprenyl diphosphate (UPP). Confers resistance to bacitracin. This Buchnera aphidicola subsp. Acyrthosiphon pisum (strain Tuc7) protein is Undecaprenyl-diphosphatase.